We begin with the raw amino-acid sequence, 128 residues long: Probable prefoldin subunit 6 (128 aa).

It belongs to the prefoldin subunit beta family. In terms of assembly, heterohexamer of two PFD-alpha type and four PFD-beta type subunits.

It localises to the cytoplasm. Its function is as follows. Binds specifically to cytosolic chaperonin (c-CPN) and transfers target proteins to it. Binds to nascent polypeptide chain and promotes folding in an environment in which there are many competing pathways for nonnative proteins. Required for positioning of the mitotic spindle. This is Probable prefoldin subunit 6 from Caenorhabditis briggsae.